A 361-amino-acid chain; its full sequence is Phospho-N-acetylmuramoyl-pentapeptide-transferase (361 aa).

A run of 10 helical transmembrane segments spans residues 27-47 (GAMV…IDHL), 72-92 (TPTM…LLWA), 94-114 (LHNP…FVGF), 133-153 (LRLA…IWAG), 169-189 (FAIN…VGAG), 200-220 (GLAI…AYLV), 240-260 (LAVL…FNAP), 264-284 (IFMG…IAVA), 289-309 (IVLA…IVQV), and 338-358 (QIVI…LSTL).

The protein belongs to the glycosyltransferase 4 family. MraY subfamily. It depends on Mg(2+) as a cofactor.

Its subcellular location is the cell inner membrane. It carries out the reaction UDP-N-acetyl-alpha-D-muramoyl-L-alanyl-gamma-D-glutamyl-meso-2,6-diaminopimeloyl-D-alanyl-D-alanine + di-trans,octa-cis-undecaprenyl phosphate = di-trans,octa-cis-undecaprenyl diphospho-N-acetyl-alpha-D-muramoyl-L-alanyl-D-glutamyl-meso-2,6-diaminopimeloyl-D-alanyl-D-alanine + UMP. It participates in cell wall biogenesis; peptidoglycan biosynthesis. In terms of biological role, catalyzes the initial step of the lipid cycle reactions in the biosynthesis of the cell wall peptidoglycan: transfers peptidoglycan precursor phospho-MurNAc-pentapeptide from UDP-MurNAc-pentapeptide onto the lipid carrier undecaprenyl phosphate, yielding undecaprenyl-pyrophosphoryl-MurNAc-pentapeptide, known as lipid I. The chain is Phospho-N-acetylmuramoyl-pentapeptide-transferase from Afipia carboxidovorans (strain ATCC 49405 / DSM 1227 / KCTC 32145 / OM5) (Oligotropha carboxidovorans).